The sequence spans 108 residues: UPF0145 protein Ava_0420 (108 aa).

It belongs to the UPF0145 family.

This is UPF0145 protein Ava_0420 from Trichormus variabilis (strain ATCC 29413 / PCC 7937) (Anabaena variabilis).